Consider the following 120-residue polypeptide: ATP synthase subunit a (120 aa).

The next 4 membrane-spanning stretches (helical) occupy residues 2-22 (FFYSLFKGTYNFIYVTIYSYL), 29-49 (FFPFFFYLFLFICLSNLVGIV), 59-79 (LNITFSLSFLVWWATCLLGFY), and 94-116 (IPFVLVPFWALIEVISFIFRSVG).

This sequence belongs to the ATPase A chain family. F-type ATPases have 2 components, CF(1) - the catalytic core - and CF(0) - the membrane proton channel. CF(1) has five subunits: alpha(3), beta(3), gamma(1), delta(1), epsilon(1). CF(0) has three main subunits: a, b and c.

Its subcellular location is the mitochondrion inner membrane. In terms of biological role, mitochondrial membrane ATP synthase (F(1)F(0) ATP synthase or Complex V) produces ATP from ADP in the presence of a proton gradient across the membrane which is generated by electron transport complexes of the respiratory chain. F-type ATPases consist of two structural domains, F(1) - containing the extramembraneous catalytic core and F(0) - containing the membrane proton channel, linked together by a central stalk and a peripheral stalk. During catalysis, ATP synthesis in the catalytic domain of F(1) is coupled via a rotary mechanism of the central stalk subunits to proton translocation. Key component of the proton channel; it may play a direct role in the translocation of protons across the membrane. This Naegleria fowleri (Brain eating amoeba) protein is ATP synthase subunit a (ATP6).